A 471-amino-acid chain; its full sequence is Secretogranin-3 (471 aa).

The first 22 residues, 1–22, serve as a signal peptide directing secretion; sequence MGFLWTGSWILVLVLNSGPIQA. Disordered regions lie at residues 24-73, 92-145, 208-231, and 345-405; these read PKPE…SNFS, KAKQ…HQLD, ANNY…KIPE, and KLEK…DEAK. The segment covering 28-45 has biased composition (basic and acidic residues); sequence GSQDKSLHNRELSAERPL. Serine 40 carries the phosphoserine modification. The O-linked (Xyl...) (chondroitin sulfate) serine glycan is linked to serine 40. The span at 62-73 shows a compositional bias: low complexity; the sequence is PSESKPSESNFS. 4 stretches are compositionally biased toward basic and acidic residues: residues 106–142, 214–231, 345–355, and 363–405; these read LNVD…DGLH, APEK…KIPE, KLEKNTTDSKS, and EKSH…DEAK. Residue serine 365 is modified to Phosphoserine.

As to quaternary structure, interacts with CHGA. Interacts with secretogranin II/SCG2. Interacts (via C-terminus) with CPE. Expression restricted to the brain and pituitary gland. Not detected in the adrenal gland.

It localises to the cytoplasmic vesicle. Its subcellular location is the secretory vesicle. The protein resides in the secretory vesicle membrane. The protein localises to the secreted. Functionally, member of the granin protein family that regulates the biogenesis of secretory granules. Acts as a sorting receptor for intragranular proteins including chromogranin A/CHGA. May also play a role in angiogenesis. Promotes endothelial proliferation, migration and tube formation through MEK/ERK signaling pathway. The protein is Secretogranin-3 (Scg3) of Rattus norvegicus (Rat).